Reading from the N-terminus, the 208-residue chain is MIGNTKIKSLLEEGLTAFQLDAIGDLLLDFLLLLNKWNKTYNLTAIRDIETMVSKHLFDSLAILPWIKGNHIIDVGTGPGLPGIPLAIAKPDLQFVLLDSNGKKISFLNEVKRQLNIKNIEPIQIRVENYHPNQGFDTVISRAFSSLEQMIKWTEHLVAQDGLWLAMKGRFPDTELVPIHQTYRVERYAVPGIEGERCCVLINNTNKE.

S-adenosyl-L-methionine is bound by residues glycine 76, leucine 81, 127-128 (VE), and arginine 142.

This sequence belongs to the methyltransferase superfamily. RNA methyltransferase RsmG family.

It is found in the cytoplasm. It catalyses the reaction guanosine(527) in 16S rRNA + S-adenosyl-L-methionine = N(7)-methylguanosine(527) in 16S rRNA + S-adenosyl-L-homocysteine. In terms of biological role, specifically methylates the N7 position of guanine in position 527 of 16S rRNA. This chain is Ribosomal RNA small subunit methyltransferase G, found in Legionella pneumophila (strain Corby).